Consider the following 230-residue polypeptide: Cytidylate kinase (230 aa).

Glycine 12 to threonine 20 contacts ATP.

This sequence belongs to the cytidylate kinase family. Type 1 subfamily.

The protein resides in the cytoplasm. It carries out the reaction CMP + ATP = CDP + ADP. The enzyme catalyses dCMP + ATP = dCDP + ADP. The chain is Cytidylate kinase from Corynebacterium diphtheriae (strain ATCC 700971 / NCTC 13129 / Biotype gravis).